The primary structure comprises 1495 residues: Ras GTPase-activating-like protein IQG1 (1495 aa).

In terms of domain architecture, Calponin-homology (CH) spans L108–W221. T264 bears the Phosphothreonine mark. S268 bears the Phosphoserine mark. At T299 the chain carries Phosphothreonine. IQ domains follow at residues E447 to S467, S538 to D567, E568 to D597, H599 to K628, E629 to N658, E687 to R716, and N717 to P746. Residues N759–I798 adopt a coiled-coil conformation. In terms of domain architecture, Ras-GAP spans S876–V1100.

In terms of assembly, interacts with AFR1. Interacts with AKR1. Interacts with activated CDC42. Interacts with calmodulin CMD1. Interacts with myosin MYO1 and its light chain MLC1. Interacts with BUD4. Interacts with INN1. Interacts with SEC3. Interacts with TEM1.

The protein localises to the bud neck. In terms of biological role, required for the assembly and the contraction of the actomyosin ring at the bud neck during cytokinesis. Seems to be involved in additional tasks during cell division like axial bud-site selection and targeted secretion by recruiting the spatial landmark BUD4, the septin CDC12 and the secretion landmark SEC3 to the bud neck. May be regulated by calcium ions. This Saccharomyces cerevisiae (strain ATCC 204508 / S288c) (Baker's yeast) protein is Ras GTPase-activating-like protein IQG1 (IQG1).